Consider the following 953-residue polypeptide: 2-oxoglutarate dehydrogenase E1 component (953 aa).

It belongs to the alpha-ketoglutarate dehydrogenase family. In terms of assembly, homodimer. Part of the 2-oxoglutarate dehydrogenase (OGDH) complex composed of E1 (2-oxoglutarate dehydrogenase), E2 (dihydrolipoamide succinyltransferase) and E3 (dihydrolipoamide dehydrogenase); the complex contains multiple copies of the three enzymatic components (E1, E2 and E3). It depends on thiamine diphosphate as a cofactor.

It catalyses the reaction N(6)-[(R)-lipoyl]-L-lysyl-[protein] + 2-oxoglutarate + H(+) = N(6)-[(R)-S(8)-succinyldihydrolipoyl]-L-lysyl-[protein] + CO2. In terms of biological role, E1 component of the 2-oxoglutarate dehydrogenase (OGDH) complex which catalyzes the decarboxylation of 2-oxoglutarate, the first step in the conversion of 2-oxoglutarate to succinyl-CoA and CO(2). This is 2-oxoglutarate dehydrogenase E1 component from Oceanobacillus iheyensis (strain DSM 14371 / CIP 107618 / JCM 11309 / KCTC 3954 / HTE831).